The chain runs to 328 residues: Glucan endo-1,3-beta-glucosidase, basic isoform 3 (328 aa).

Glu85 acts as the Proton donor in catalysis. Residue Glu230 is the Nucleophile of the active site. Positions 306–328 (VSERVWDISAETNSTTSSLISEM) are cleaved as a propeptide — removed in mature form. Asn318 carries N-linked (GlcNAc...) asparagine glycosylation.

The protein belongs to the glycosyl hydrolase 17 family.

The protein localises to the vacuole. The catalysed reaction is Hydrolysis of (1-&gt;3)-beta-D-glucosidic linkages in (1-&gt;3)-beta-D-glucans.. Functionally, is thought to be an important plant defense-related product against fungal pathogens. The protein is Glucan endo-1,3-beta-glucosidase, basic isoform 3 (GLUB3) of Solanum tuberosum (Potato).